The sequence spans 333 residues: Tetraacyldisaccharide 4'-kinase (333 aa).

60–67 serves as a coordination point for ATP; that stretch reads TVGGTGKT.

It belongs to the LpxK family.

It catalyses the reaction a lipid A disaccharide + ATP = a lipid IVA + ADP + H(+). It participates in glycolipid biosynthesis; lipid IV(A) biosynthesis; lipid IV(A) from (3R)-3-hydroxytetradecanoyl-[acyl-carrier-protein] and UDP-N-acetyl-alpha-D-glucosamine: step 6/6. Functionally, transfers the gamma-phosphate of ATP to the 4'-position of a tetraacyldisaccharide 1-phosphate intermediate (termed DS-1-P) to form tetraacyldisaccharide 1,4'-bis-phosphate (lipid IVA). The sequence is that of Tetraacyldisaccharide 4'-kinase from Ectopseudomonas mendocina (strain ymp) (Pseudomonas mendocina).